A 140-amino-acid polypeptide reads, in one-letter code: Nucleoside diphosphate kinase (140 aa).

ATP contacts are provided by Lys-11, Phe-59, Arg-87, Thr-93, Arg-104, and Asn-114. Residue His-117 is the Pros-phosphohistidine intermediate of the active site.

Belongs to the NDK family. As to quaternary structure, homotetramer. The cofactor is Mg(2+).

It is found in the cytoplasm. It catalyses the reaction a 2'-deoxyribonucleoside 5'-diphosphate + ATP = a 2'-deoxyribonucleoside 5'-triphosphate + ADP. The catalysed reaction is a ribonucleoside 5'-diphosphate + ATP = a ribonucleoside 5'-triphosphate + ADP. In terms of biological role, major role in the synthesis of nucleoside triphosphates other than ATP. The ATP gamma phosphate is transferred to the NDP beta phosphate via a ping-pong mechanism, using a phosphorylated active-site intermediate. This is Nucleoside diphosphate kinase from Rhodopseudomonas palustris (strain BisB18).